A 569-amino-acid polypeptide reads, in one-letter code: Ribosome-inactivating protein SNAI' (569 aa).

Residues 1 to 28 (MKVVATILYLVVLAICGLGIHGAHPTHS) form the signal peptide. Asn40 carries an N-linked (GlcNAc...) asparagine glycan. Residue Glu201 is part of the active site. 3 cysteine pairs are disulfide-bonded: Cys286/Cys311, Cys328/Cys347, and Cys369/Cys381. Ricin B-type lectin domains are found at residues 315–435 (EEVT…WIVG) and 437–565 (VEPL…WIAS). The stretch at 325 to 365 (DGFCAEVKNGDEKDGTPVQLSSCGEQSNQQWTFSTDGTIQS) is one 1-alpha repeat. The 1-beta repeat unit spans residues 366–401 (LGKCLTTSSSVMIYNCKVVPPESTKWVVSIDGTITN). The stretch at 404–436 (SGLVLTAPKAAEGTLVSLEKNVHAARQGWIVGN) is one 1-gamma repeat. Residues 448–488 (EQMCLETNPGNNDVSLGDCSVKSASKVDQKWALYGDGTIRV) form a 2-alpha repeat. 2 disulfide bridges follow: Cys451-Cys466 and Cys495-Cys512. Residues 492 to 530 (RSLCVTSEGKSSNEPIIILKCLGWANQRWVFNTDGTISN) form a 2-beta repeat. One copy of the 2-gamma repeat lies at 533–566 (SKLVMHVDQNDVPLRKIILSHPSGTSNQQWIAST).

It in the N-terminal section; belongs to the ribosome-inactivating protein family. Type 2 RIP subfamily. As to quaternary structure, disulfide-linked dimer of A and B chains.

The enzyme catalyses Endohydrolysis of the N-glycosidic bond at one specific adenosine on the 28S rRNA.. Its function is as follows. The A chain is responsible for inhibiting protein synthesis through the catalytic inactivation of 60S ribosomal subunits by removing adenine from position 4,324 of 28S rRNA. The B chain binds to cell receptors and probably facilitates the entry into the cell of the A chain; B chains are also responsible for cell agglutination (lectin activity). Agglutination is inhibited by Neu5Ac(alpha2,6)lactose, and N-linked glycoproteins such as fetuin and orosomucoid. The chain is Ribosome-inactivating protein SNAI' from Sambucus nigra (European elder).